The chain runs to 318 residues: MPENLEIRPSSFENFIGQKKLVETLQILISSSQKRKQSLDHILFYGPPGTGKTTLANIVANVLEAKIKYVQGPLLEKKSDVLAVLANISPDTIIFIDEIHGINKNIEELLYSAMEEFVIDLQIGVDGERKIMRMKLPQFTLIGASTKLAQISTPLQNRFGYVAKIVDYTLEDMIQIIRNSSAVLKLKMNTEIIKYIASFSNNTPRIANNLLKRIRDFALVLNAKRIDKDIVNKTFDSIGIYNQGLSQINIEYLNLLVKIFKGKSVALDVIANVLKEHRQTIINIIEPPLIEKELIEKTSRGRRITKKGRDYLLELKTN.

The interval 1-168 (MPENLEIRPS…FGYVAKIVDY (168 aa)) is large ATPase domain (RuvB-L). Residues I7, R8, G49, K52, T53, T54, R158, Y168, and R205 each coordinate ATP. A Mg(2+)-binding site is contributed by T53. The segment at 169 to 239 (TLEDMIQIIR…IVNKTFDSIG (71 aa)) is small ATPAse domain (RuvB-S). Residues 242 to 318 (NQGLSQINIE…RDYLLELKTN (77 aa)) form a head domain (RuvB-H) region. DNA is bound by residues R278, K297, and R302.

It belongs to the RuvB family. As to quaternary structure, homohexamer. Forms an RuvA(8)-RuvB(12)-Holliday junction (HJ) complex. HJ DNA is sandwiched between 2 RuvA tetramers; dsDNA enters through RuvA and exits via RuvB. An RuvB hexamer assembles on each DNA strand where it exits the tetramer. Each RuvB hexamer is contacted by two RuvA subunits (via domain III) on 2 adjacent RuvB subunits; this complex drives branch migration. In the full resolvosome a probable DNA-RuvA(4)-RuvB(12)-RuvC(2) complex forms which resolves the HJ.

Its subcellular location is the cytoplasm. The catalysed reaction is ATP + H2O = ADP + phosphate + H(+). Its function is as follows. The RuvA-RuvB-RuvC complex processes Holliday junction (HJ) DNA during genetic recombination and DNA repair, while the RuvA-RuvB complex plays an important role in the rescue of blocked DNA replication forks via replication fork reversal (RFR). RuvA specifically binds to HJ cruciform DNA, conferring on it an open structure. The RuvB hexamer acts as an ATP-dependent pump, pulling dsDNA into and through the RuvAB complex. RuvB forms 2 homohexamers on either side of HJ DNA bound by 1 or 2 RuvA tetramers; 4 subunits per hexamer contact DNA at a time. Coordinated motions by a converter formed by DNA-disengaged RuvB subunits stimulates ATP hydrolysis and nucleotide exchange. Immobilization of the converter enables RuvB to convert the ATP-contained energy into a lever motion, pulling 2 nucleotides of DNA out of the RuvA tetramer per ATP hydrolyzed, thus driving DNA branch migration. The RuvB motors rotate together with the DNA substrate, which together with the progressing nucleotide cycle form the mechanistic basis for DNA recombination by continuous HJ branch migration. Branch migration allows RuvC to scan DNA until it finds its consensus sequence, where it cleaves and resolves cruciform DNA. This chain is Holliday junction branch migration complex subunit RuvB, found in Mesomycoplasma hyopneumoniae (strain 232) (Mycoplasma hyopneumoniae).